A 226-amino-acid polypeptide reads, in one-letter code: Phospholipase Culp4 (226 aa).

Positions 1–45 (MIPRPQPHSGRWRAGAARRLTSLVAAAFAAATLLLTPALAPPASA) are cleaved as a signal peptide. An intrachain disulfide couples C47 to C117. The Nucleophile role is filled by S128. A disulfide bond links C191 and C198. D195 is an active-site residue. H207 (proton donor/acceptor) is an active-site residue.

Belongs to the cutinase family. As to quaternary structure, homodimer.

The protein localises to the cell membrane. It localises to the secreted. It is found in the cell wall. It carries out the reaction 1,2-dihexadecanoyl-sn-glycero-3-phosphocholine + H2O = 1-hexadecanoyl-sn-glycero-3-phosphocholine + hexadecanoate + H(+). The enzyme catalyses a butanoate ester + H2O = an aliphatic alcohol + butanoate + H(+). Inhibited by high concentrations of paraoxon. Inhibited by tetrahydrolipstatin (THL), a specific lipase inhibitor. Functionally, A2-type phospholipase, which is probably involved in the degradation of macrophage membrane. Hydrolyzes dipalmitoylphosphatidylcholine. Also shows moderate esterase activity and hydrolyzes the p-nitrophenol-linked aliphatic ester pNP-butyrate (C4). Does not exhibit cutinase activity. This is Phospholipase Culp4 from Mycobacterium tuberculosis (strain ATCC 25618 / H37Rv).